A 179-amino-acid chain; its full sequence is Peptide deformylase (179 aa).

Residues Cys-102 and His-144 each coordinate Fe cation. The active site involves Glu-145. Residue His-148 coordinates Fe cation.

It belongs to the polypeptide deformylase family. It depends on Fe(2+) as a cofactor.

It catalyses the reaction N-terminal N-formyl-L-methionyl-[peptide] + H2O = N-terminal L-methionyl-[peptide] + formate. Functionally, removes the formyl group from the N-terminal Met of newly synthesized proteins. Requires at least a dipeptide for an efficient rate of reaction. N-terminal L-methionine is a prerequisite for activity but the enzyme has broad specificity at other positions. The polypeptide is Peptide deformylase (Wolbachia pipientis wMel).